Here is a 118-residue protein sequence, read N- to C-terminus: UPF0342 protein BCG9842_B4422 (118 aa).

Belongs to the UPF0342 family.

This Bacillus cereus (strain G9842) protein is UPF0342 protein BCG9842_B4422.